We begin with the raw amino-acid sequence, 243 residues long: Pyrimidodiazepine synthase (243 aa).

Positions 20-102 constitute a GST N-terminal domain; it reads GILRLYSMRF…YLDEQYPLRP (83 aa). C30 serves as the catalytic Nucleophile. Residues K57, V70, and 86–87 each bind glutathione; that span reads ES. A GST C-terminal domain is found at 107-230; that stretch reads DPLKKVQDKL…VQAEFLRTRS (124 aa).

This sequence belongs to the GST superfamily. Omega family. In terms of assembly, homodimer.

It carries out the reaction 2-amino-6-acetyl-3,7,8,9-tetrahydro-3H-pyrimido[4,5-b][1,4]diazepin-4-one + glutathione disulfide + H2O = 6-pyruvoyl-5,6,7,8-tetrahydropterin + 2 glutathione. Functionally, mediates the conversion of 2-amino-4-oxo-6-pyruvoyl-5,6,7,8-tetrahydropteridine (6-PTP; also named 6-pyruvoyltetrahydropterin) to 2-amino-6-acetyl-3,7,8,9-tetrahydro-3H-pyrimido(4,5-b)[1,4]diazepin-4-one (pyrimidodiazepine or PDA), a key intermediate in red eye pigment drosopterin biosynthesis. The sequence is that of Pyrimidodiazepine synthase from Drosophila melanogaster (Fruit fly).